Here is a 544-residue protein sequence, read N- to C-terminus: Chaperonin GroEL (544 aa).

ATP is bound by residues 30-33 (TLGP), K51, 87-91 (DGTTT), G415, 479-481 (NAA), and D495.

This sequence belongs to the chaperonin (HSP60) family. In terms of assembly, forms a cylinder of 14 subunits composed of two heptameric rings stacked back-to-back. Interacts with the co-chaperonin GroES.

The protein resides in the cytoplasm. It catalyses the reaction ATP + H2O + a folded polypeptide = ADP + phosphate + an unfolded polypeptide.. In terms of biological role, together with its co-chaperonin GroES, plays an essential role in assisting protein folding. The GroEL-GroES system forms a nano-cage that allows encapsulation of the non-native substrate proteins and provides a physical environment optimized to promote and accelerate protein folding. The protein is Chaperonin GroEL of Francisella tularensis subsp. tularensis (strain SCHU S4 / Schu 4).